Here is a 157-residue protein sequence, read N- to C-terminus: D-aminoacyl-tRNA deacylase (157 aa).

Residues 137–138 carry the Gly-cisPro motif, important for rejection of L-amino acids motif; the sequence is GP.

This sequence belongs to the DTD family. As to quaternary structure, homodimer.

It is found in the cytoplasm. The enzyme catalyses glycyl-tRNA(Ala) + H2O = tRNA(Ala) + glycine + H(+). The catalysed reaction is a D-aminoacyl-tRNA + H2O = a tRNA + a D-alpha-amino acid + H(+). In terms of biological role, an aminoacyl-tRNA editing enzyme that deacylates mischarged D-aminoacyl-tRNAs. Also deacylates mischarged glycyl-tRNA(Ala), protecting cells against glycine mischarging by AlaRS. Acts via tRNA-based rather than protein-based catalysis; rejects L-amino acids rather than detecting D-amino acids in the active site. By recycling D-aminoacyl-tRNA to D-amino acids and free tRNA molecules, this enzyme counteracts the toxicity associated with the formation of D-aminoacyl-tRNA entities in vivo and helps enforce protein L-homochirality. The protein is D-aminoacyl-tRNA deacylase of Roseiflexus castenholzii (strain DSM 13941 / HLO8).